Here is a 332-residue protein sequence, read N- to C-terminus: L-lactate dehydrogenase A chain (332 aa).

NAD(+) contacts are provided by residues Gly29–Lys57 and Arg99. Substrate-binding residues include Arg106, Asn138, and Arg169. Asn138 is an NAD(+) binding site. His193 acts as the Proton acceptor in catalysis. Thr248 serves as a coordination point for substrate.

Belongs to the LDH/MDH superfamily. LDH family. Homotetramer.

Its subcellular location is the cytoplasm. The enzyme catalyses (S)-lactate + NAD(+) = pyruvate + NADH + H(+). Its pathway is fermentation; pyruvate fermentation to lactate; (S)-lactate from pyruvate: step 1/1. Interconverts simultaneously and stereospecifically pyruvate and lactate with concomitant interconversion of NADH and NAD(+). In Caiman crocodilus apaporiensis (Rio Apaporis caiman), this protein is L-lactate dehydrogenase A chain (LDHA).